The primary structure comprises 825 residues: KH domain-containing protein YLL032C (825 aa).

Positions Pro482 to Leu556 constitute a KH domain. Residues Ser727–Asn740 show a composition bias toward low complexity. The interval Ser727–His766 is disordered. Positions Phe741–Ser762 are enriched in polar residues. At Ser762 the chain carries Phosphoserine.

The protein resides in the cytoplasm. The polypeptide is KH domain-containing protein YLL032C (Saccharomyces cerevisiae (strain ATCC 204508 / S288c) (Baker's yeast)).